The primary structure comprises 511 residues: 2-methylbutanal oxime monooxygenase (511 aa).

Transmembrane regions (helical) follow at residues 10-30 and 304-324; these read PPQWLSILAVFLLPILTLLLF and ILMNVFVGGIDTSAVTITWAF. C451 is a binding site for heme.

The protein belongs to the cytochrome P450 family. The cofactor is heme. Expressed in storage roots, primary roots, petioles and vascular tissues. Expressed in the outer cortex cells, the endodermis and around the xylem, phloem cells and laticifers.

The protein localises to the microsome membrane. The enzyme catalyses (1E,2S)-2-methylbutanal oxime + reduced [NADPH--hemoprotein reductase] + O2 = 2-hydroxy-2-methylbutanenitrile + oxidized [NADPH--hemoprotein reductase] + 2 H2O + H(+). It catalyses the reaction (E)-2-methylpropanal oxime + reduced [NADPH--hemoprotein reductase] + O2 = 2-hydroxy-2-methylpropanenitrile + oxidized [NADPH--hemoprotein reductase] + 2 H2O + H(+). Functionally, catalyzes the conversion of (E)-2-methylpropanal oxime (valox) to 2-hydroxy-2-methylpropanenitrile (acetone cyanohydrin) and of (E)-2-methylbutanal oxime (ilox) to 2-hydroxy-2-methylbutyronitrile. The reaction takes place in three steps. First, the oxime is isomerized to the (Z)- isomer, next the (Z)-isomer is dehydrated to the corresponding nitrile, followed by a C-hydroxylation of the nitrile. Can use both aliphatic and aromatic oximes as substrates. The polypeptide is 2-methylbutanal oxime monooxygenase (CYP71E7) (Manihot esculenta (Cassava)).